We begin with the raw amino-acid sequence, 368 residues long: uncharacterized protein (368 aa).

The N-terminal stretch at 1-19 is a signal peptide; it reads MHVSMIIFVSIFSIKYIMA. 4 N-linked (GlcNAc...) asparagine; by host glycosylation sites follow: Asn-99, Asn-170, Asn-266, and Asn-295.

This is an uncharacterized protein from Ostreid herpesvirus 1 (isolate France) (OsHV-1).